Here is a 1516-residue protein sequence, read N- to C-terminus: Neurite extension and migration factor (1516 aa).

Residues 380–405 are compositionally biased toward basic and acidic residues; that stretch reads LDKKKGKEEGQEDKGVEKKDGKDNGE. Disordered stretches follow at residues 380 to 440, 589 to 610, 1158 to 1225, 1373 to 1419, and 1437 to 1479; these read LDKK…GSFS, QKKK…SQKQ, TFND…STKK, TPQE…PGYN, and LGNN…ESGT. Composition is skewed to polar residues over residues 596–610, 1158–1170, and 1185–1194; these read NTNT…SQKQ, TFND…STNN, and GAMNQSSSQK. A compositionally biased stretch (basic residues) spans 1443 to 1453; sequence THKKLYRHKSS. The segment covering 1456-1479 has biased composition (basic and acidic residues); that stretch reads ALRDEKCKGKHMEREQVHKDESGT.

As to expression, highly expressed in fetal and adult brain, predominantly in the cerebral cortex and the cerebellum. Also expressed in other tissues but to a lesser extent.

Its subcellular location is the nucleus. It is found in the cytoplasm. Functionally, involved in neurite outgrowth by regulating cell-cell adhesion via the N-cadherin signaling pathway. May act by regulating expression of protein-coding genes, such as N-cadherins and integrin beta-1 (ITGB1). This Homo sapiens (Human) protein is Neurite extension and migration factor.